Reading from the N-terminus, the 117-residue chain is Large ribosomal subunit protein bL20c (117 aa).

This sequence belongs to the bacterial ribosomal protein bL20 family.

The protein resides in the plastid. It localises to the chloroplast. Its function is as follows. Binds directly to 23S ribosomal RNA and is necessary for the in vitro assembly process of the 50S ribosomal subunit. It is not involved in the protein synthesizing functions of that subunit. This chain is Large ribosomal subunit protein bL20c (rpl20), found in Arabidopsis thaliana (Mouse-ear cress).